The sequence spans 870 residues: DNA mismatch repair protein MutS (870 aa).

620 to 627 is an ATP binding site; the sequence is GPNMAGKS.

Belongs to the DNA mismatch repair MutS family.

In terms of biological role, this protein is involved in the repair of mismatches in DNA. It is possible that it carries out the mismatch recognition step. This protein has a weak ATPase activity. The chain is DNA mismatch repair protein MutS from Acetivibrio thermocellus (strain ATCC 27405 / DSM 1237 / JCM 9322 / NBRC 103400 / NCIMB 10682 / NRRL B-4536 / VPI 7372) (Clostridium thermocellum).